The sequence spans 376 residues: Probable plastid-lipid-associated protein 3, chloroplastic (376 aa).

The transit peptide at 1–53 (MATLFTVARPSSLLYVSSINPSKTFSPSISLKLNSLSFSFGYRPKPLRFSKIR) directs the protein to the chloroplast. The interval 54-146 (SSLPSESESE…EADAGNGSAV (93 aa)) is disordered. A compositionally biased stretch (polar residues) spans 85-96 (PDSQPDNVTVNV). The segment covering 117-126 (MESDPPRNED) has biased composition (basic and acidic residues).

Belongs to the PAP/fibrillin family.

It localises to the plastid. It is found in the chloroplast. The protein resides in the plastoglobule. In terms of biological role, probably involved in light/cold stress-related jasmonate (JA) biosynthesis. The protein is Probable plastid-lipid-associated protein 3, chloroplastic (PAP3) of Arabidopsis thaliana (Mouse-ear cress).